The chain runs to 194 residues: Peptidyl-tRNA hydrolase (194 aa).

The active-site Proton acceptor is histidine 22. TRNA contacts are provided by tyrosine 67, asparagine 69, and asparagine 115.

Belongs to the PTH family. In terms of assembly, monomer.

The protein localises to the cytoplasm. It carries out the reaction an N-acyl-L-alpha-aminoacyl-tRNA + H2O = an N-acyl-L-amino acid + a tRNA + H(+). Functionally, hydrolyzes ribosome-free peptidyl-tRNAs (with 1 or more amino acids incorporated), which drop off the ribosome during protein synthesis, or as a result of ribosome stalling. Catalyzes the release of premature peptidyl moieties from peptidyl-tRNA molecules trapped in stalled 50S ribosomal subunits, and thus maintains levels of free tRNAs and 50S ribosomes. The polypeptide is Peptidyl-tRNA hydrolase (Granulibacter bethesdensis (strain ATCC BAA-1260 / CGDNIH1)).